The sequence spans 251 residues: Prolactin-7B1 (251 aa).

Positions 1 to 29 are cleaved as a signal peptide; sequence MHLSLTQQCLWPLQILLVSNLLLWENVAA. Asparagine 73 is a glycosylation site (N-linked (GlcNAc...) asparagine). 2 disulfides stabilise this stretch: cysteine 100-cysteine 216 and cysteine 233-cysteine 241.

This sequence belongs to the somatotropin/prolactin family.

Its subcellular location is the secreted. In Rattus norvegicus (Rat), this protein is Prolactin-7B1 (Prl7b1).